Reading from the N-terminus, the 198-residue chain is MKIIVATRNAGKVGEFQAMLGRLGYDVESLLDYDTAPETEETGSTFEENAELKSKEAAAYFGHAVLSDDSGLEVDALDGAPGVYSARFAGEDKSDAANNALLLEKLADTPADRRTARFVCALSLAKPSGETLTVRGTMEGQIGFEQKGTNGFGYDPLFLIPSLNQTAAELTKSEKAAISHRGQALKKLEAALTTFLGE.

7-12 (TRNAGK) serves as a coordination point for substrate. Mg(2+) contacts are provided by E40 and D69. Catalysis depends on D69, which acts as the Proton acceptor. Substrate contacts are provided by residues S70, 152-155 (FGYD), K175, and 180-181 (HR).

It belongs to the HAM1 NTPase family. Homodimer. The cofactor is Mg(2+).

The catalysed reaction is XTP + H2O = XMP + diphosphate + H(+). It carries out the reaction dITP + H2O = dIMP + diphosphate + H(+). The enzyme catalyses ITP + H2O = IMP + diphosphate + H(+). Pyrophosphatase that catalyzes the hydrolysis of nucleoside triphosphates to their monophosphate derivatives, with a high preference for the non-canonical purine nucleotides XTP (xanthosine triphosphate), dITP (deoxyinosine triphosphate) and ITP. Seems to function as a house-cleaning enzyme that removes non-canonical purine nucleotides from the nucleotide pool, thus preventing their incorporation into DNA/RNA and avoiding chromosomal lesions. This chain is dITP/XTP pyrophosphatase, found in Exiguobacterium sibiricum (strain DSM 17290 / CCUG 55495 / CIP 109462 / JCM 13490 / 255-15).